A 601-amino-acid chain; its full sequence is Elongation factor 4 (601 aa).

The tr-type G domain maps to Arg-7–Lys-189. Residues Asp-19–Thr-24 and Asn-136–Asp-139 each bind GTP.

Belongs to the TRAFAC class translation factor GTPase superfamily. Classic translation factor GTPase family. LepA subfamily.

It is found in the cell inner membrane. It carries out the reaction GTP + H2O = GDP + phosphate + H(+). In terms of biological role, required for accurate and efficient protein synthesis under certain stress conditions. May act as a fidelity factor of the translation reaction, by catalyzing a one-codon backward translocation of tRNAs on improperly translocated ribosomes. Back-translocation proceeds from a post-translocation (POST) complex to a pre-translocation (PRE) complex, thus giving elongation factor G a second chance to translocate the tRNAs correctly. Binds to ribosomes in a GTP-dependent manner. This is Elongation factor 4 from Xanthomonas campestris pv. campestris (strain ATCC 33913 / DSM 3586 / NCPPB 528 / LMG 568 / P 25).